A 250-amino-acid chain; its full sequence is Triosephosphate isomerase (250 aa).

9 to 11 (NWK) serves as a coordination point for substrate. Catalysis depends on H94, which acts as the Electrophile. E165 (proton acceptor) is an active-site residue. Residues G171, S211, and 232 to 233 (GG) each bind substrate.

It belongs to the triosephosphate isomerase family. In terms of assembly, homodimer.

The protein localises to the cytoplasm. The catalysed reaction is D-glyceraldehyde 3-phosphate = dihydroxyacetone phosphate. It functions in the pathway carbohydrate biosynthesis; gluconeogenesis. The protein operates within carbohydrate degradation; glycolysis; D-glyceraldehyde 3-phosphate from glycerone phosphate: step 1/1. In terms of biological role, involved in the gluconeogenesis. Catalyzes stereospecifically the conversion of dihydroxyacetone phosphate (DHAP) to D-glyceraldehyde-3-phosphate (G3P). The polypeptide is Triosephosphate isomerase (Alkalilimnicola ehrlichii (strain ATCC BAA-1101 / DSM 17681 / MLHE-1)).